Consider the following 868-residue polypeptide: MHEQYTPRDIEAAAQKFWDEQQSFAVTEQPGKDTYYCLSMFPYPSGKLHMGHVRNYTIGDVIARYQRMLGKNVLQPMGWDAFGMPAENAAMKNNVAPAKWTYENIDYMKTQLKSLGLAIDWAREVTTCKPDYYRWEQWLFTRLFEKGIIYRKNGTVNWDPADQTVLANEQVIDGRGWRSGALIEKREIPMYYFRITDYADELLESLDELPGWPEQVKTMQRNWIGKSRGMEVQFPYDQASIGHEGTLKVFTTRPDTLMGATYVAVAAEHPLATQAAQGNPALQAFIDECKSGSVAEADMATQEKKGMATSLLVEHPLTGEKLPVWVANYVLMHYGDGAVMAVPAHDERDFEFAHKYNLPVKAVVRTSAGDEVGSEWQAAYGEHGQLINSAEFDGLDFAGAFDAIEAALIRKELGKSRTQFRLRDWGISRQRYWGCPIPIIHCPSCGDVPVPEDQLPVTLPENVVPDGAGSPLARMPEFYECTCPKCGTAAKRETDTMDTFVESSWYFARYASPNYDKGLVDPKAANHWLPVDQYIGGIEHAILHLLYARFFHKLMRDEGLVTSNEPFKNLLTQGMVVAETYYRVASNGGKDWFNPADVEIERDAKAKIIGARLKTDGLPVEIGGTEKMSKSKNNGVDPQSMIEAYGADTCRLFMMFASPPDMSLEWSDSGVEGASRFLRRVWRLAQAHVSQGLPGKLDVATLDDAQKVIRRAIHAAIKQASTDVGQFHKFNTAIAQVMTVMNVLEKAPQATEQDRALLQEGLEAVTLLLAPITPHISHELWQQLGHAGSVIDAAWPSVDEQALVQDTITLVVQVNGKLRGQVEMPAAASREEVEAAARGNENVLRFIDGLTIRKVIVVPGKLVNIVAN.

The 'HIGH' region signature appears at 42–52 (PYPSGKLHMGH). The 'KMSKS' region motif lies at 627–631 (KMSKS). ATP is bound at residue K630.

Belongs to the class-I aminoacyl-tRNA synthetase family.

Its subcellular location is the cytoplasm. The catalysed reaction is tRNA(Leu) + L-leucine + ATP = L-leucyl-tRNA(Leu) + AMP + diphosphate. The polypeptide is Leucine--tRNA ligase (Pseudomonas putida (strain GB-1)).